The following is a 936-amino-acid chain: VPS35 endosomal protein-sorting factor-like (936 aa).

Disordered stretches follow at residues 43-69 (SKTKKVSRKGSTSSTSSSSSSSVVDPL) and 87-113 (DPAATVTVTESSRKKRDKDDNSFVGPD). Low complexity predominate over residues 51–69 (KGSTSSTSSSSSSSVVDPL). S265 is subject to Phosphoserine. The chain crosses the membrane as a helical span at residues 672 to 692 (AFVRACVAYCFITIPSLVGIF).

It belongs to the VPS35L family. Component of the heterotrimeric retriever complex formed by VPS26C, VPS29 and VPS35L. Interacts with VPS29. Interacts with COMMD1, CCDC93 and CCDC22; associates with the CCC (COMMD/CCDC22/CCDC93) complex which contains at least COMMD1 (and possibly other COMM domain-containing proteins), CCDC22 and CCDC93. Interacts with WASHC1, WASHC2A and WASHC2C. Interacts with SNX17 and SNX31.

Its subcellular location is the membrane. The protein localises to the endosome. Functionally, acts as a component of the retriever complex. The retriever complex is a heterotrimeric complex related to retromer cargo-selective complex (CSC) and essential for retromer-independent retrieval and recycling of numerous cargos such as integrin alpha-5/beta-1 (ITGA5:ITGB1). The recruitment of the retriever complex to the endosomal membrane involves CCC and WASH complexes. In the endosomes, drives the retrieval and recycling of NxxY-motif-containing cargo proteins by coupling to SNX17, a cargo essential for the homeostatic maintenance of numerous cell surface proteins associated with processes that include cell migration, cell adhesion, nutrient supply and cell signaling. Involved in copper-dependent ATP7A trafficking between the trans-Golgi network and vesicles in the cell periphery; the function is proposed to depend on its association with the CCC complex and cooperation with the WASH complex on early endosomes. Seems not to be required for CCC complex stability. This Rattus norvegicus (Rat) protein is VPS35 endosomal protein-sorting factor-like.